Consider the following 290-residue polypeptide: Light-independent protochlorophyllide reductase iron-sulfur ATP-binding protein (290 aa).

ATP is bound by residues 10–15 (GIGKST) and Lys39. Position 14 (Ser14) interacts with Mg(2+). 2 residues coordinate [4Fe-4S] cluster: Cys95 and Cys129. 180 to 181 (NR) contributes to the ATP binding site.

This sequence belongs to the NifH/BchL/ChlL family. Homodimer. Protochlorophyllide reductase is composed of three subunits; ChlL, ChlN and ChlB. Requires [4Fe-4S] cluster as cofactor.

Its subcellular location is the plastid. It localises to the chloroplast. The enzyme catalyses chlorophyllide a + oxidized 2[4Fe-4S]-[ferredoxin] + 2 ADP + 2 phosphate = protochlorophyllide a + reduced 2[4Fe-4S]-[ferredoxin] + 2 ATP + 2 H2O. Its pathway is porphyrin-containing compound metabolism; chlorophyll biosynthesis (light-independent). In terms of biological role, component of the dark-operative protochlorophyllide reductase (DPOR) that uses Mg-ATP and reduced ferredoxin to reduce ring D of protochlorophyllide (Pchlide) to form chlorophyllide a (Chlide). This reaction is light-independent. The L component serves as a unique electron donor to the NB-component of the complex, and binds Mg-ATP. The sequence is that of Light-independent protochlorophyllide reductase iron-sulfur ATP-binding protein from Pyropia yezoensis (Susabi-nori).